Reading from the N-terminus, the 28-residue chain is Ranatuerin-2SEb (28 aa).

Cys-23 and Cys-28 form a disulfide bridge.

In terms of tissue distribution, expressed by the skin glands.

The protein localises to the secreted. Functionally, mast cell degranulating peptide. Causes histamine release from rat peritoneal mast cells in vitro. Has antibacterial activity against the Gram-negative bacterium E.coli K12 and Gram-positive bacterium M.luteus NCT C2665. This chain is Ranatuerin-2SEb, found in Lithobates sevosus (Dusky gopher frog).